A 282-amino-acid chain; its full sequence is PAK4-inhibitor INKA1 (282 aa).

Disordered regions lie at residues 21 to 50 and 92 to 127; these read RDTGSPPMSGPLQPKPRTDQNVQPKRQFRA and GFSEVSGSTWREEEPSVPQRQAPRERPPHSQRFSVS. 2 inka box regions span residues 163–200 and 256–282; these read EAEDWTAALLNRGRSRQPLVLGDNCFADLVHNWMELPE and PADISRFAALMNCRSRQPIIYNDVSYL.

It belongs to the INKA family. Interacts with PAK4. Expressed in tissues of the developing head during neurulation.

The protein resides in the nucleus. Its subcellular location is the cytoplasm. Its function is as follows. Inhibitor of the serine/threonine-protein kinase PAK4. Acts by binding PAK4 in a substrate-like manner, inhibiting the protein kinase activity. The protein is PAK4-inhibitor INKA1 of Mus musculus (Mouse).